Here is a 181-residue protein sequence, read N- to C-terminus: Large ribosomal subunit protein uL16 (181 aa).

It belongs to the universal ribosomal protein uL16 family. In terms of assembly, part of the 50S ribosomal subunit.

In Pyrococcus furiosus (strain ATCC 43587 / DSM 3638 / JCM 8422 / Vc1), this protein is Large ribosomal subunit protein uL16.